The sequence spans 120 residues: Ribonuclease P protein component (120 aa).

It belongs to the RnpA family. As to quaternary structure, consists of a catalytic RNA component (M1 or rnpB) and a protein subunit.

It catalyses the reaction Endonucleolytic cleavage of RNA, removing 5'-extranucleotides from tRNA precursor.. Its function is as follows. RNaseP catalyzes the removal of the 5'-leader sequence from pre-tRNA to produce the mature 5'-terminus. It can also cleave other RNA substrates such as 4.5S RNA. The protein component plays an auxiliary but essential role in vivo by binding to the 5'-leader sequence and broadening the substrate specificity of the ribozyme. This chain is Ribonuclease P protein component, found in Chlamydia trachomatis serovar A (strain ATCC VR-571B / DSM 19440 / HAR-13).